Consider the following 129-residue polypeptide: Small ribosomal subunit protein uS11 (129 aa).

This sequence belongs to the universal ribosomal protein uS11 family. Part of the 30S ribosomal subunit. Interacts with proteins S7 and S18. Binds to IF-3.

In terms of biological role, located on the platform of the 30S subunit, it bridges several disparate RNA helices of the 16S rRNA. Forms part of the Shine-Dalgarno cleft in the 70S ribosome. The polypeptide is Small ribosomal subunit protein uS11 (Thermosipho melanesiensis (strain DSM 12029 / CIP 104789 / BI429)).